A 544-amino-acid chain; its full sequence is uncharacterized protein (544 aa).

The next 14 helical transmembrane spans lie at 31 to 51 (ILVFYLLFFLTDVAGIPAALA), 52 to 72 (GSVLMIGKIFDAINDPIIGLL), 84 to 104 (LPWMLGGMIPFALFYTAQWLI), 116 to 136 (WGLFIYYVAIAMAFNLCYTTV), 162 to 182 (FAFSIGGSILSLILYILIAAG), 191 to 211 (FGELGVMISVLSISALLWSAL), 230 to 250 (LAPLLMAAGITLILLAIAKSF), 257 to 277 (GFDYISFFLILLGLIWGGFGF), 318 to 338 (FLFVIGIYLCSWLAVQLTASI), 356 to 376 (TIALAVQGTALVMLFVWQALA), 383 to 403 (VIYFLGSMVWMGAEAGLWLVQ), 407 to 427 (VALLYTLAIFAGVGVSVAYLI), 450 to 470 (FFYAFMVLLQKVGLALGLFLV), and 501 to 521 (FAVAPLPAFFLLGGLILAIFY).

The protein belongs to the sodium:galactoside symporter (TC 2.A.2) family.

Its subcellular location is the cell membrane. This is an uncharacterized protein from Synechocystis sp. (strain ATCC 27184 / PCC 6803 / Kazusa).